The sequence spans 199 residues: Putative acetyltransferase SAV2555 (199 aa).

The protein belongs to the transferase hexapeptide repeat family.

This Staphylococcus aureus (strain Mu50 / ATCC 700699) protein is Putative acetyltransferase SAV2555.